Here is a 277-residue protein sequence, read N- to C-terminus: Ribosomal RNA small subunit methyltransferase A (277 aa).

S-adenosyl-L-methionine-binding residues include Asn18, Leu20, Gly45, Glu66, Asp89, and Asn110.

Belongs to the class I-like SAM-binding methyltransferase superfamily. rRNA adenine N(6)-methyltransferase family. RsmA subfamily.

The protein localises to the cytoplasm. The enzyme catalyses adenosine(1518)/adenosine(1519) in 16S rRNA + 4 S-adenosyl-L-methionine = N(6)-dimethyladenosine(1518)/N(6)-dimethyladenosine(1519) in 16S rRNA + 4 S-adenosyl-L-homocysteine + 4 H(+). Its function is as follows. Specifically dimethylates two adjacent adenosines (A1518 and A1519) in the loop of a conserved hairpin near the 3'-end of 16S rRNA in the 30S particle. May play a critical role in biogenesis of 30S subunits. The protein is Ribosomal RNA small subunit methyltransferase A of Cupriavidus taiwanensis (strain DSM 17343 / BCRC 17206 / CCUG 44338 / CIP 107171 / LMG 19424 / R1) (Ralstonia taiwanensis (strain LMG 19424)).